The chain runs to 460 residues: V-type ATP synthase beta chain (460 aa).

It belongs to the ATPase alpha/beta chains family.

Functionally, produces ATP from ADP in the presence of a proton gradient across the membrane. The V-type beta chain is a regulatory subunit. The protein is V-type ATP synthase beta chain of Acetivibrio thermocellus (strain ATCC 27405 / DSM 1237 / JCM 9322 / NBRC 103400 / NCIMB 10682 / NRRL B-4536 / VPI 7372) (Clostridium thermocellum).